The chain runs to 61 residues: [Val1,Thr6]-bradykinyl-Val,Asp (61 aa).

The first 22 residues, 1 to 22 (MAFLKKSLFLVLFLGVVSLSFC), serve as a signal peptide directing secretion. The propeptide occupies 23-48 (EEEEREEHEEEKREAEAAESAENLIS). The tract at residues 27–61 (REEHEEEKREAEAAESAENLISKRVPPGFTPFRVD) is disordered.

Expressed by the skin glands. Expression levels in inguinal glands and granular glands are virtually the same.

Its subcellular location is the secreted. Its function is as follows. Induces contraction of rat ileum smooth muscle (EC(50)=2.73 uM) but has no activity towards rat smooth muscle from tail artery, urinary bladder or uterus. Binds to both bradykinin receptor B1 (BDKRB1) and B2 (BDKRB2); the effect via BDKRB1 is stronger. The protein is [Val1,Thr6]-bradykinyl-Val,Asp of Physalaemus nattereri (Cuyaba dwarf frog).